The sequence spans 1217 residues: MQMEDKGEALNPDAMYSLLKEIDQEISHTDNISIDQLPEEDTLDNEKKIDASENVIENTEEEALQLGDESANTTTEIKETSCTEDHDTVENTEDVISMAEGLDKAPLETAWIKHNYQQTKPVVSKRLISNDGSDTSVEDINASTRIPSYTSEEITGLELKDKMVTDVGERLSHFLDQKYAENPNLPALKGMLSMADEKAMEDDPKKDKPLVFTIEPTKPLFPSKEVSSTMIQVEIHTPDEDDVDGAAADTKEATNLLLDSKIPVTPNVCINRFVNNNGETRVSSGSSTEDAQELNTHRFQDRYHLLSGAQAVPQLPQLPALTLQDYKSSSVQSVNASRIFSVATTNDNYQSAKEYDLSSTVGCEELSDDASVKDLEIPEPNELPCFPTFQLDSTSMKTSSSMETVQHDKAKFNSDVNIADDTMEQIEQEEAELISNPERSGSPTNDNMSQHSQNRQLLGVSEVSQAQQAPEHHVEMSVEFQDEGRRDITSSFSRESDRIELPPLPPMNGLSTMFDQDLFNDHETSHESIDLTSSSHKENYLSIWHSQKTGGSFISPALSTNSQFSTQSRTSSVPTNHSGSSFKFKSRIISNSHVFKQEAFRQFSDEYVLSTQDDSKLDPLRRNTIMSKRIQQELKTQAKMYPFANKFALDESSEPSIHNESIITGDISRTSDKAVDTTNILSHKNLTLLPPQSTETVFSSFLDNFDKDDFEEKLAEESRLNSKKNLQTTWGHFRDVSSGNVDIKATQQQIAEVLHNQNEDVVQVGSHIQDVKVLLGNEIEGYDVQKSVSDLSVETTKKSPIKHVGSPFKVKARSETPPQSPVVYERDTTEVNEGLQRAPTTSLASVYLENSLQEFESSELQDHGKLYLKLKSINSLRLQQIKRHNAKYCIEFDNGKEVIETPWESIPEDGPIKMSQEFEVNMESNNVTLFMTMKIRYTSPQNQLTEVVEKIPIKKRFAFGKTKYRLEKRFVTKKLKYDDWDFKFAKDGSFARCQVNVNKNMLKQIKYKTNELHFEFLNEWEREFDEKIAQTYKEDELWKLPRKNPSKVCSLTVDVMYLPRTSSMERFPKNLKAVQKCCEKYLEQQRVNNEGFLWQEGGDVEGMLKRRYMILKGTELIAHDEVTRKPQTLLNLLNVVDIYSDGKTATGKQMRNFTDMVLFSDCFKLLFANDEVINFNADSNLLKQQWVEILTSVVELNKFHQPWIKRVFENEQYNITF.

Residues 430–514 (EAELISNPER…PPMNGLSTMF (85 aa)) form a disordered region. A compositionally biased stretch (polar residues) spans 437 to 468 (PERSGSPTNDNMSQHSQNRQLLGVSEVSQAQQ). Basic and acidic residues predominate over residues 470–500 (PEHHVEMSVEFQDEGRRDITSSFSRESDRIE). The PH domain maps to 1086–1195 (RVNNEGFLWQ…WVEILTSVVE (110 aa)).

It belongs to the BUD4 family.

The protein resides in the bud neck. Its function is as follows. Required for selection of future bud sites. Cooperates with other bud site selection proteins to recognize a spatial landmark during mitosis and they subsequently become a landmark for downstream polarity establishment factors that coordinate budding and cytokinesis. Involved in the septin organization at the bud neck. This Kluyveromyces lactis (strain ATCC 8585 / CBS 2359 / DSM 70799 / NBRC 1267 / NRRL Y-1140 / WM37) (Yeast) protein is Bud site selection protein 4 (BUD4).